A 119-amino-acid chain; its full sequence is Ribonuclease P protein component (119 aa).

It belongs to the RnpA family. Consists of a catalytic RNA component (M1 or rnpB) and a protein subunit.

It catalyses the reaction Endonucleolytic cleavage of RNA, removing 5'-extranucleotides from tRNA precursor.. Its function is as follows. RNaseP catalyzes the removal of the 5'-leader sequence from pre-tRNA to produce the mature 5'-terminus. It can also cleave other RNA substrates such as 4.5S RNA. The protein component plays an auxiliary but essential role in vivo by binding to the 5'-leader sequence and broadening the substrate specificity of the ribozyme. The protein is Ribonuclease P protein component of Bacillus pumilus (strain SAFR-032).